An 86-amino-acid polypeptide reads, in one-letter code: Small ribosomal subunit protein bS20 (86 aa).

Basic residues predominate over residues 1-11 (MANIKSQKKRV). Residues 1 to 20 (MANIKSQKKRVRTNEKAHQR) form a disordered region.

This sequence belongs to the bacterial ribosomal protein bS20 family.

In terms of biological role, binds directly to 16S ribosomal RNA. This Bifidobacterium animalis subsp. lactis (strain AD011) protein is Small ribosomal subunit protein bS20.